Here is a 770-residue protein sequence, read N- to C-terminus: 3-isopropylmalate dehydratase (770 aa).

Positions 354, 415, and 418 each coordinate [4Fe-4S] cluster.

The protein belongs to the aconitase/IPM isomerase family. As to quaternary structure, monomer. The cofactor is [4Fe-4S] cluster.

The catalysed reaction is (2R,3S)-3-isopropylmalate = (2S)-2-isopropylmalate. It participates in amino-acid biosynthesis; L-leucine biosynthesis; L-leucine from 3-methyl-2-oxobutanoate: step 2/4. Its function is as follows. Catalyzes the isomerization between 2-isopropylmalate and 3-isopropylmalate, via the formation of 2-isopropylmaleate. This chain is 3-isopropylmalate dehydratase (LEU1), found in Candida maltosa (Yeast).